The following is a 416-amino-acid chain: Serine hydroxymethyltransferase 1 (416 aa).

(6S)-5,6,7,8-tetrahydrofolate-binding positions include leucine 121 and 125-127 (GHL). Lysine 229 carries the N6-(pyridoxal phosphate)lysine modification. Residues glutamate 245 and 354–356 (SPF) each bind (6S)-5,6,7,8-tetrahydrofolate.

Belongs to the SHMT family. Homodimer. The cofactor is pyridoxal 5'-phosphate.

Its subcellular location is the cytoplasm. It carries out the reaction (6R)-5,10-methylene-5,6,7,8-tetrahydrofolate + glycine + H2O = (6S)-5,6,7,8-tetrahydrofolate + L-serine. It participates in one-carbon metabolism; tetrahydrofolate interconversion. Its pathway is amino-acid biosynthesis; glycine biosynthesis; glycine from L-serine: step 1/1. Functionally, catalyzes the reversible interconversion of serine and glycine with tetrahydrofolate (THF) serving as the one-carbon carrier. This reaction serves as the major source of one-carbon groups required for the biosynthesis of purines, thymidylate, methionine, and other important biomolecules. Also exhibits THF-independent aldolase activity toward beta-hydroxyamino acids, producing glycine and aldehydes, via a retro-aldol mechanism. The sequence is that of Serine hydroxymethyltransferase 1 from Vibrio parahaemolyticus serotype O3:K6 (strain RIMD 2210633).